We begin with the raw amino-acid sequence, 558 residues long: Phosphatidylserine lipase ABHD16A (558 aa).

A run of 2 helical transmembrane segments spans residues 60 to 80 and 93 to 113; these read ILAL…FAFF and VVPF…VACL. The Cytoplasmic portion of the chain corresponds to 114 to 558; sequence RGIGRWTNPQ…AQHFQMPWCL (445 aa). The region spanning 281-407 is the AB hydrolase-1 domain; sequence LVICCEGNAG…LVTRTVRQHL (127 aa). Active-site charge relay system residues include serine 355, aspartate 430, and histidine 507.

This sequence belongs to the AB hydrolase superfamily. ABHD16 family.

It is found in the membrane. The catalysed reaction is 1-heptadecanoyl-2-(5Z,8Z,11Z,14Z-eicosatetraenoyl)-sn-glycero-3-phosphoserine + H2O = 1-heptadecanoyl-sn-glycero-3-phosphoserine + (5Z,8Z,11Z,14Z)-eicosatetraenoate + H(+). It carries out the reaction 1-hexadecanoyl-2-(9Z-octadecenoyl)-sn-glycero-3-phospho-L-serine + H2O = 1-hexadecanoyl-sn-glycero-3-phospho-L-serine + (9Z)-octadecenoate + H(+). It catalyses the reaction 1-octadecanoyl-2-(9Z,12Z-octadecadienoyl)-sn-glycero-3-phosphoserine + H2O = 1-octadecanoyl-sn-glycero-3-phosphoserine + (9Z,12Z)-octadecadienoate + H(+). The enzyme catalyses 1-heptadecanoyl-2-(5Z,8Z,11Z,14Z-eicosatetraenoyl)-sn-glycero-3-phosphocholine + H2O = 1-heptadecanoyl-sn-glycero-3-phosphocholine + (5Z,8Z,11Z,14Z)-eicosatetraenoate + H(+). The catalysed reaction is 1-hexadecanoyl-2-(9Z-octadecenoyl)-sn-glycero-3-phosphoglycerol + H2O = 1-hexadecanoyl-sn-glycero-3-phosphoglycerol + (9Z)-octadecenoate + H(+). It carries out the reaction 1-hexadecanoyl-2-(9Z-octadecenoyl)-sn-glycero-3-phospho-(1D-myo-inositol) + H2O = 1-hexadecanoyl-sn-glycero-3-phospho-(1D-myo-inositol) + (9Z)-octadecenoate + H(+). It catalyses the reaction 1-heptadecanoyl-2-(5Z,8Z,11Z,14Z-eicosatetraenoyl)-sn-glycero-3-phosphoethanolamine + H2O = 1-heptadecanoyl-sn-glycero-3-phosphoethanolamine + (5Z,8Z,11Z,14Z)-eicosatetraenoate + H(+). The enzyme catalyses 1-hexadecanoyl-2-(9Z-octadecenoyl)-sn-glycero-3-phospho-(1'-sn-glycerol) + H2O = 1-hexadecanoyl-sn-glycero-3-phospho-(1'-sn-glycerol) + (9Z)-octadecenoate + H(+). The catalysed reaction is Hydrolyzes glycerol monoesters of long-chain fatty acids.. It carries out the reaction 1-tetradecanoylglycerol + H2O = tetradecanoate + glycerol + H(+). It catalyses the reaction 2-hexadecanoylglycerol + H2O = glycerol + hexadecanoate + H(+). The enzyme catalyses 1-(9Z-octadecenoyl)-glycerol + H2O = glycerol + (9Z)-octadecenoate + H(+). The catalysed reaction is 2-(9Z-octadecenoyl)-glycerol + H2O = glycerol + (9Z)-octadecenoate + H(+). It carries out the reaction 2-(9Z,12Z-octadecadienoyl)-glycerol + H2O = (9Z,12Z)-octadecadienoate + glycerol + H(+). It catalyses the reaction 1-(5Z,8Z,11Z,14Z-eicosatetraenoyl)-glycerol + H2O = glycerol + (5Z,8Z,11Z,14Z)-eicosatetraenoate + H(+). The enzyme catalyses 2-(5Z,8Z,11Z,14Z-eicosatetraenoyl)-glycerol + H2O = glycerol + (5Z,8Z,11Z,14Z)-eicosatetraenoate + H(+). The catalysed reaction is prostaglandin D2-1-glycerol ester + H2O = prostaglandin D2 + glycerol + H(+). It carries out the reaction 2-glyceryl-15-deoxy-Delta(12,14)-prostaglandin J2 + H2O = 15-deoxy-Delta(12,14)-prostaglandin J2 + glycerol + H(+). It catalyses the reaction 1-(9Z,12Z-octadecadienoyl)-glycerol + H2O = (9Z,12Z)-octadecadienoate + glycerol + H(+). In terms of biological role, phosphatidylserine (PS) lipase that mediates the hydrolysis of phosphatidylserine to generate lysophosphatidylserine (LPS). LPS constitutes a class of signaling lipids that regulates immunological and neurological processes. Has no activity towards diacylglycerol, triacylglycerol or lysophosphatidylserine lipase. Also has monoacylglycerol lipase activity, with preference for 1-(9Z,12Z-octadecadienoyl)-glycerol (1-LG) and 2-glyceryl-15-deoxy-Delta(12,14)-prostaglandin J2 (15d-PGJ(2)-G). The sequence is that of Phosphatidylserine lipase ABHD16A from Rattus norvegicus (Rat).